The primary structure comprises 558 residues: Alpha-1,3-mannosyltransferase MNT2 (558 aa).

At 1 to 6 (MRRKNR) the chain is on the cytoplasmic side. A helical; Signal-anchor for type II membrane protein transmembrane segment spans residues 7-27 (LFILVVLLGIVLVVYYSQLNS). Residues 28–558 (LDLVEPVQSS…QIVDIWNKDI (531 aa)) lie on the Lumenal side of the membrane. Asn187 carries an N-linked (GlcNAc...) asparagine glycan.

It belongs to the MNN1/MNT family.

The protein resides in the golgi apparatus membrane. The protein operates within protein modification; protein glycosylation. Mannosyltransferase involved in adding the 4th and 5th mannose residues of O-linked glycans. This chain is Alpha-1,3-mannosyltransferase MNT2 (MNT2), found in Saccharomyces cerevisiae (strain ATCC 204508 / S288c) (Baker's yeast).